Reading from the N-terminus, the 372-residue chain is Invasion protein InvE (372 aa).

A compositionally biased stretch (polar residues) spans 1-19; it reads MIPGSTSGISFSRILSRQT. The tract at residues 1–46 is disordered; it reads MIPGSTSGISFSRILSRQTSHQDATQHTDAQQAEIQQAAEDSSPGA. Over residues 21–40 the composition is skewed to low complexity; that stretch reads HQDATQHTDAQQAEIQQAAE.

The protein localises to the cell membrane. Its function is as follows. Involved in the triggering of intracellular events that lead to microbial internalization. These events include increase in calcium level, redistribution of actin microfilaments, and changes in the normal structure of the microvilli. Encoded within the type III secretion system (SPI-1 T3SS), it is essential for the translocation of protein effectors into host cells. Forms a complex with SipB and SipC in the presence of their chaperone SicA. Positively regulates the secretion of SPI-1 T3SS effector proteins SipB, SipC and SipD and negatively influences the secretion of SipA, SopA and SptP. This is Invasion protein InvE (invE) from Salmonella typhimurium (strain LT2 / SGSC1412 / ATCC 700720).